The sequence spans 71 residues: Long neurotoxin Tx-NM3-1 (71 aa).

5 disulfides stabilise this stretch: Cys3–Cys20, Cys14–Cys41, Cys26–Cys30, Cys45–Cys56, and Cys57–Cys62.

As to expression, expressed by the venom gland.

It is found in the secreted. Functionally, binds with high affinity to muscular (alpha-1-beta-1-gamma-delta/CHRNA1-CHRNB1-CHRNG-CHRND) and neuronal (alpha-7/CHRNA7) nicotinic acetylcholine receptor (nAChR) and inhibits acetylcholine from binding to the receptor, thereby impairing neuromuscular and neuronal transmission. Ranges of nAChR inhibition are in nanomolar (competitive binding with alpha-bungarotoxin gives Ki=1.66 nM on muscle nAChR and Ki=4.84 nM on alpha-7). Also shows moderate inhibition on GABA(A) alpha-1-beta-3-gamma-2 receptor (GABRA1-GABRB3-GABRG2) (IC(50)=0.68 uM), and a lower inhibition on alpha-1-beta-2-gamma-2 (GABRA1-GABRB2-GABRG2) and alpha-3-beta-2-gamma-2 (GABRA3-GABRB2-GABRG2). This Naja melanoleuca (Forest cobra) protein is Long neurotoxin Tx-NM3-1.